We begin with the raw amino-acid sequence, 336 residues long: Holliday junction branch migration complex subunit RuvB (336 aa).

The interval 4-184 is large ATPase domain (RuvB-L); it reads ADRLISAGTT…FGIVQRLEFY (181 aa). Residues Ile-23, Arg-24, Gly-65, Lys-68, Thr-69, Thr-70, 131 to 133, Arg-174, Tyr-184, and Arg-221 contribute to the ATP site; that span reads EDY. Residue Thr-69 participates in Mg(2+) binding. Residues 185 to 255 are small ATPAse domain (RuvB-S); that stretch reads QVPDLQYIVS…IAAQALDMLN (71 aa). Residues 258–336 form a head domain (RuvB-H) region; the sequence is AEGFDYMDRK…HFGITPPEMP (79 aa). Residues Arg-294, Arg-313, and Arg-318 each contribute to the DNA site.

It belongs to the RuvB family. As to quaternary structure, homohexamer. Forms an RuvA(8)-RuvB(12)-Holliday junction (HJ) complex. HJ DNA is sandwiched between 2 RuvA tetramers; dsDNA enters through RuvA and exits via RuvB. An RuvB hexamer assembles on each DNA strand where it exits the tetramer. Each RuvB hexamer is contacted by two RuvA subunits (via domain III) on 2 adjacent RuvB subunits; this complex drives branch migration. In the full resolvosome a probable DNA-RuvA(4)-RuvB(12)-RuvC(2) complex forms which resolves the HJ.

It localises to the cytoplasm. The catalysed reaction is ATP + H2O = ADP + phosphate + H(+). In terms of biological role, the RuvA-RuvB-RuvC complex processes Holliday junction (HJ) DNA during genetic recombination and DNA repair, while the RuvA-RuvB complex plays an important role in the rescue of blocked DNA replication forks via replication fork reversal (RFR). RuvA specifically binds to HJ cruciform DNA, conferring on it an open structure. The RuvB hexamer acts as an ATP-dependent pump, pulling dsDNA into and through the RuvAB complex. RuvB forms 2 homohexamers on either side of HJ DNA bound by 1 or 2 RuvA tetramers; 4 subunits per hexamer contact DNA at a time. Coordinated motions by a converter formed by DNA-disengaged RuvB subunits stimulates ATP hydrolysis and nucleotide exchange. Immobilization of the converter enables RuvB to convert the ATP-contained energy into a lever motion, pulling 2 nucleotides of DNA out of the RuvA tetramer per ATP hydrolyzed, thus driving DNA branch migration. The RuvB motors rotate together with the DNA substrate, which together with the progressing nucleotide cycle form the mechanistic basis for DNA recombination by continuous HJ branch migration. Branch migration allows RuvC to scan DNA until it finds its consensus sequence, where it cleaves and resolves cruciform DNA. The polypeptide is Holliday junction branch migration complex subunit RuvB (Shigella boydii serotype 18 (strain CDC 3083-94 / BS512)).